A 98-amino-acid chain; its full sequence is MSMVYANIFLAFIMSLMGLLVYRSHLMSSLLCLEGMMLSLFVMMTVTILINHFTLASMAPIILLVFAACEAALGLSLLVMVSNTYGTDYVQNLNLLQC.

A run of 3 helical transmembrane segments spans residues 1 to 21, 30 to 50, and 61 to 81; these read MSMVYANIFLAFIMSLMGLLV, LLCLEGMMLSLFVMMTVTILI, and IILLVFAACEAALGLSLLVMV.

The protein belongs to the complex I subunit 4L family. Core subunit of respiratory chain NADH dehydrogenase (Complex I) which is composed of 45 different subunits.

The protein resides in the mitochondrion inner membrane. It carries out the reaction a ubiquinone + NADH + 5 H(+)(in) = a ubiquinol + NAD(+) + 4 H(+)(out). Core subunit of the mitochondrial membrane respiratory chain NADH dehydrogenase (Complex I) which catalyzes electron transfer from NADH through the respiratory chain, using ubiquinone as an electron acceptor. Part of the enzyme membrane arm which is embedded in the lipid bilayer and involved in proton translocation. The polypeptide is NADH-ubiquinone oxidoreductase chain 4L (MT-ND4L) (Pagophilus groenlandicus (Harp seal)).